The sequence spans 166 residues: Mitochondrial inner membrane protease subunit 1 (166 aa).

Residues S40 and K83 contribute to the active site.

This sequence belongs to the peptidase S26 family. IMP1 subfamily. In terms of assembly, heterodimer of 2 subunits, IMMPL1 and IMMPL2.

The protein resides in the mitochondrion inner membrane. Functionally, catalyzes the removal of transit peptides required for the targeting of proteins from the mitochondrial matrix, across the inner membrane, into the inter-membrane space. Known to process the nuclear encoded protein DIABLO. In Mus musculus (Mouse), this protein is Mitochondrial inner membrane protease subunit 1 (Immp1l).